The chain runs to 495 residues: UDP-N-acetylmuramoyl-L-alanyl-D-glutamate--2,6-diaminopimelate ligase (495 aa).

Ser-29 contributes to the UDP-N-acetyl-alpha-D-muramoyl-L-alanyl-D-glutamate binding site. ATP is bound at residue 111 to 117 (GTNGKTS). Residues 153 to 154 (TT), Ser-180, Gln-186, and Arg-188 contribute to the UDP-N-acetyl-alpha-D-muramoyl-L-alanyl-D-glutamate site. Position 220 is an N6-carboxylysine (Lys-220). Meso-2,6-diaminopimelate is bound by residues Arg-384, 408–411 (DNPR), Gly-459, and Glu-463. Residues 408–411 (DNPR) carry the Meso-diaminopimelate recognition motif motif.

This sequence belongs to the MurCDEF family. MurE subfamily. Requires Mg(2+) as cofactor. Carboxylation is probably crucial for Mg(2+) binding and, consequently, for the gamma-phosphate positioning of ATP.

It is found in the cytoplasm. It carries out the reaction UDP-N-acetyl-alpha-D-muramoyl-L-alanyl-D-glutamate + meso-2,6-diaminopimelate + ATP = UDP-N-acetyl-alpha-D-muramoyl-L-alanyl-gamma-D-glutamyl-meso-2,6-diaminopimelate + ADP + phosphate + H(+). It participates in cell wall biogenesis; peptidoglycan biosynthesis. Functionally, catalyzes the addition of meso-diaminopimelic acid to the nucleotide precursor UDP-N-acetylmuramoyl-L-alanyl-D-glutamate (UMAG) in the biosynthesis of bacterial cell-wall peptidoglycan. The sequence is that of UDP-N-acetylmuramoyl-L-alanyl-D-glutamate--2,6-diaminopimelate ligase from Xylella fastidiosa (strain 9a5c).